A 238-amino-acid chain; its full sequence is Aspartate/glutamate leucyltransferase (238 aa).

Belongs to the R-transferase family. Bpt subfamily.

The protein localises to the cytoplasm. It catalyses the reaction N-terminal L-glutamyl-[protein] + L-leucyl-tRNA(Leu) = N-terminal L-leucyl-L-glutamyl-[protein] + tRNA(Leu) + H(+). The catalysed reaction is N-terminal L-aspartyl-[protein] + L-leucyl-tRNA(Leu) = N-terminal L-leucyl-L-aspartyl-[protein] + tRNA(Leu) + H(+). In terms of biological role, functions in the N-end rule pathway of protein degradation where it conjugates Leu from its aminoacyl-tRNA to the N-termini of proteins containing an N-terminal aspartate or glutamate. This Shewanella oneidensis (strain ATCC 700550 / JCM 31522 / CIP 106686 / LMG 19005 / NCIMB 14063 / MR-1) protein is Aspartate/glutamate leucyltransferase.